The following is a 397-amino-acid chain: Succinate--CoA ligase [ADP-forming] subunit beta (397 aa).

The ATP-grasp domain occupies 9 to 254; that stretch reads KALLKGYGAP…ETEEDAKEIE (246 aa). Residues lysine 46, 53–55, glutamate 109, alanine 112, and glutamate 117 each bind ATP; that span reads GRG. Residues asparagine 209 and aspartate 223 each coordinate Mg(2+). Substrate contacts are provided by residues asparagine 274 and 331–333; that span reads GIM.

The protein belongs to the succinate/malate CoA ligase beta subunit family. In terms of assembly, heterotetramer of two alpha and two beta subunits. Mg(2+) is required as a cofactor.

It catalyses the reaction succinate + ATP + CoA = succinyl-CoA + ADP + phosphate. The catalysed reaction is GTP + succinate + CoA = succinyl-CoA + GDP + phosphate. It participates in carbohydrate metabolism; tricarboxylic acid cycle; succinate from succinyl-CoA (ligase route): step 1/1. Succinyl-CoA synthetase functions in the citric acid cycle (TCA), coupling the hydrolysis of succinyl-CoA to the synthesis of either ATP or GTP and thus represents the only step of substrate-level phosphorylation in the TCA. The beta subunit provides nucleotide specificity of the enzyme and binds the substrate succinate, while the binding sites for coenzyme A and phosphate are found in the alpha subunit. The protein is Succinate--CoA ligase [ADP-forming] subunit beta of Rhizobium etli (strain CIAT 652).